The sequence spans 224 residues: Phosphoribosylformylglycinamidine synthase subunit PurQ (224 aa).

Residues 2 to 224 (KIAVIVFPGS…SLLEEGKVKG (223 aa)) enclose the Glutamine amidotransferase type-1 domain. Cys-86 functions as the Nucleophile in the catalytic mechanism. Catalysis depends on residues His-195 and Glu-197.

Part of the FGAM synthase complex composed of 1 PurL, 1 PurQ and 2 PurS subunits.

It localises to the cytoplasm. The catalysed reaction is N(2)-formyl-N(1)-(5-phospho-beta-D-ribosyl)glycinamide + L-glutamine + ATP + H2O = 2-formamido-N(1)-(5-O-phospho-beta-D-ribosyl)acetamidine + L-glutamate + ADP + phosphate + H(+). It catalyses the reaction L-glutamine + H2O = L-glutamate + NH4(+). It participates in purine metabolism; IMP biosynthesis via de novo pathway; 5-amino-1-(5-phospho-D-ribosyl)imidazole from N(2)-formyl-N(1)-(5-phospho-D-ribosyl)glycinamide: step 1/2. Part of the phosphoribosylformylglycinamidine synthase complex involved in the purines biosynthetic pathway. Catalyzes the ATP-dependent conversion of formylglycinamide ribonucleotide (FGAR) and glutamine to yield formylglycinamidine ribonucleotide (FGAM) and glutamate. The FGAM synthase complex is composed of three subunits. PurQ produces an ammonia molecule by converting glutamine to glutamate. PurL transfers the ammonia molecule to FGAR to form FGAM in an ATP-dependent manner. PurS interacts with PurQ and PurL and is thought to assist in the transfer of the ammonia molecule from PurQ to PurL. The polypeptide is Phosphoribosylformylglycinamidine synthase subunit PurQ (Ligilactobacillus salivarius (strain UCC118) (Lactobacillus salivarius)).